The chain runs to 65 residues: Large ribosomal subunit protein bL35 (65 aa).

This sequence belongs to the bacterial ribosomal protein bL35 family.

In Magnetococcus marinus (strain ATCC BAA-1437 / JCM 17883 / MC-1), this protein is Large ribosomal subunit protein bL35.